We begin with the raw amino-acid sequence, 565 residues long: Oxygen-dependent choline dehydrogenase (565 aa).

7-36 provides a ligand contact to FAD; sequence DYIICGAGSAGNVLATRLTEDPGVTVLLLE. His-474 serves as the catalytic Proton acceptor.

It belongs to the GMC oxidoreductase family. Requires FAD as cofactor.

The catalysed reaction is choline + A = betaine aldehyde + AH2. It carries out the reaction betaine aldehyde + NAD(+) + H2O = glycine betaine + NADH + 2 H(+). The protein operates within amine and polyamine biosynthesis; betaine biosynthesis via choline pathway; betaine aldehyde from choline (cytochrome c reductase route): step 1/1. Functionally, involved in the biosynthesis of the osmoprotectant glycine betaine. Catalyzes the oxidation of choline to betaine aldehyde and betaine aldehyde to glycine betaine at the same rate. The sequence is that of Oxygen-dependent choline dehydrogenase from Burkholderia pseudomallei (strain 1710b).